Here is a 71-residue protein sequence, read N- to C-terminus: Biotinylated protein TB7.3 homolog (71 aa).

The 70-residue stretch at 2–71 folds into the Biotinyl-binding domain; the sequence is AEDVRAEIVA…QAGDLIAVIS (70 aa). Position 37 is an N6-biotinyllysine (lysine 37).

This Mycobacterium leprae (strain TN) protein is Biotinylated protein TB7.3 homolog.